Reading from the N-terminus, the 198-residue chain is Nudix hydrolase 21, chloroplastic (198 aa).

The transit peptide at 1 to 37 (MISLFISNFSNLSNLSPTFDNMNMNIPSKKIVPVPTP) directs the protein to the chloroplast. Residues 59–191 (GYRQVVGCVP…WMREALEAFI (133 aa)) enclose the Nudix hydrolase domain. Residues 98 to 119 (GGWEIDESIEEAALRETIEEAG) carry the Nudix box motif. 2 residues coordinate Mg(2+): E113 and E117.

The protein belongs to the Nudix hydrolase family. The cofactor is Mg(2+). Requires Mn(2+) as cofactor. In terms of tissue distribution, expressed in roots, leaves, stems and inflorescences.

Its subcellular location is the plastid. It localises to the chloroplast. Its function is as follows. Probably mediates the hydrolysis of some nucleoside diphosphate derivatives. The protein is Nudix hydrolase 21, chloroplastic (NUDT21) of Arabidopsis thaliana (Mouse-ear cress).